A 206-amino-acid polypeptide reads, in one-letter code: Probable glutathione S-transferase 8 (206 aa).

A GST N-terminal domain is found at V2–G79. Glutathione is bound by residues Y8, W39, K43, G49–L51, and Q63–S64. The 126-residue stretch at C81–F206 folds into the GST C-terminal domain.

Belongs to the GST superfamily. Sigma family.

It carries out the reaction RX + glutathione = an S-substituted glutathione + a halide anion + H(+). In terms of biological role, conjugation of reduced glutathione to a wide number of exogenous and endogenous hydrophobic electrophiles. This Caenorhabditis elegans protein is Probable glutathione S-transferase 8 (gst-8).